We begin with the raw amino-acid sequence, 445 residues long: Phosphoglucosamine mutase (445 aa).

Residue S101 is the Phosphoserine intermediate of the active site. Positions 101, 240, 242, and 244 each coordinate Mg(2+). S101 carries the post-translational modification Phosphoserine.

Belongs to the phosphohexose mutase family. Mg(2+) is required as a cofactor. Post-translationally, activated by phosphorylation.

It catalyses the reaction alpha-D-glucosamine 1-phosphate = D-glucosamine 6-phosphate. Its function is as follows. Catalyzes the conversion of glucosamine-6-phosphate to glucosamine-1-phosphate. This Pseudomonas aeruginosa (strain LESB58) protein is Phosphoglucosamine mutase.